Here is a 202-residue protein sequence, read N- to C-terminus: Dephospho-CoA kinase (202 aa).

Positions 6–202 (KVSITGDLSS…EYFYALKGAL (197 aa)) constitute a DPCK domain. 14–19 (SSGKTE) is an ATP binding site.

The protein belongs to the CoaE family.

The protein resides in the cytoplasm. The enzyme catalyses 3'-dephospho-CoA + ATP = ADP + CoA + H(+). It participates in cofactor biosynthesis; coenzyme A biosynthesis; CoA from (R)-pantothenate: step 5/5. In terms of biological role, catalyzes the phosphorylation of the 3'-hydroxyl group of dephosphocoenzyme A to form coenzyme A. This Chlamydia felis (strain Fe/C-56) (Chlamydophila felis) protein is Dephospho-CoA kinase.